The sequence spans 427 residues: Trigger factor (427 aa).

The PPIase FKBP-type domain occupies 163–248 (GDTVVIDFVG…VNEVKAKEVP (86 aa)).

Belongs to the FKBP-type PPIase family. Tig subfamily.

Its subcellular location is the cytoplasm. It carries out the reaction [protein]-peptidylproline (omega=180) = [protein]-peptidylproline (omega=0). Involved in protein export. Acts as a chaperone by maintaining the newly synthesized protein in an open conformation. Functions as a peptidyl-prolyl cis-trans isomerase. In Streptococcus thermophilus (strain CNRZ 1066), this protein is Trigger factor.